The following is a 126-amino-acid chain: Mating-type protein A1 (126 aa).

A DNA-binding region (homeobox) is located at residues Ser-70–Lys-126.

This sequence belongs to the MATA1 family. Binds DNA with a high specificity as a heterodimer of A1 and ALPHA2.

It is found in the nucleus. Mating type proteins are sequence specific DNA-binding proteins that act as master switches in yeast differentiation by controlling gene expression in a cell type-specific fashion. Transcriptional corepressor that, in a/alpha diploid cells, binds cooperatively with the ALPHA2 protein to a 21-bp DNA sequence termed the haploid-specific gene (hsg) operator, to repress transcription of haploid-specific genes and of MATALPHA1. In Saccharomyces cerevisiae (Baker's yeast), this protein is Mating-type protein A1 (MATA1).